A 357-amino-acid polypeptide reads, in one-letter code: Gene 58 protein (357 aa).

It belongs to the herpesviridae BMRF2 family.

In Saimiri sciureus (Common squirrel monkey), this protein is Gene 58 protein (58).